A 146-amino-acid polypeptide reads, in one-letter code: Large ribosomal subunit protein bL9 (146 aa).

It belongs to the bacterial ribosomal protein bL9 family.

Functionally, binds to the 23S rRNA. In Deinococcus deserti (strain DSM 17065 / CIP 109153 / LMG 22923 / VCD115), this protein is Large ribosomal subunit protein bL9.